The sequence spans 3135 residues: Gametocyte surface protein P230 (3135 aa).

An N-terminal signal peptide occupies residues 1–20 (MKKIITLKNLFLIILVYIFS). N-linked (GlcNAc...) asparagine glycans are attached at residues asparagine 76, asparagine 111, asparagine 135, and asparagine 239. The disordered stretch occupies residues 266-470 (EEDMSPRDNF…EEKDEGGESF (205 aa)). Acidic residues-rich tracts occupy residues 276–321 (VIDD…EEQL) and 329–345 (VGAE…DEDS). A compositionally biased stretch (basic and acidic residues) spans 346 to 358 (VEARDGDMIRVDE). Acidic residues-rich tracts occupy residues 376-444 (DVDE…EGEY) and 458-467 (GDEEEKDEGG). Asparagine 585 carries N-linked (GlcNAc...) asparagine glycosylation. 6-Cys domains are found at residues 589–730 (KEYV…VEPY) and 733–887 (KING…INEE). 4 cysteine pairs are disulfide-bonded: cysteine 593–cysteine 611, cysteine 626–cysteine 706, cysteine 737–cysteine 781, and cysteine 804–cysteine 862. N-linked (GlcNAc...) asparagine glycans are attached at residues asparagine 821, asparagine 829, asparagine 889, asparagine 961, asparagine 1079, asparagine 1089, and asparagine 1153. 6-Cys domains lie at 918–1133 (HDYT…ISKQ), 1136–1275 (KIKG…LKRE), 1285–1432 (KIYK…VSKR), and 1435–1560 (KVKG…YKKL). Intrachain disulfides connect cysteine 1140–cysteine 1161, cysteine 1175–cysteine 1251, and cysteine 1200–cysteine 1249. 7 N-linked (GlcNAc...) asparagine glycosylation sites follow: asparagine 1267, asparagine 1300, asparagine 1452, asparagine 1492, asparagine 1508, asparagine 1621, and asparagine 1624. 3 disulfides stabilise this stretch: cysteine 1439/cysteine 1459, cysteine 1473/cysteine 1534, and cysteine 1483/cysteine 1532. 6-Cys domains are found at residues 1694-1907 (NRHV…ISNS), 1910-2035 (KING…LNKD), 2052-2199 (NVHL…VRKN), and 2204-2374 (SFKL…SDNR). Cystine bridges form between cysteine 1698/cysteine 1726 and cysteine 1740/cysteine 1881. Asparagine 1753, asparagine 1804, asparagine 1882, asparagine 1920, asparagine 1954, and asparagine 1972 each carry an N-linked (GlcNAc...) asparagine glycan. Cystine bridges form between cysteine 1914–cysteine 1938, cysteine 1952–cysteine 2017, cysteine 1963–cysteine 2015, and cysteine 2056–cysteine 2074. 2 N-linked (GlcNAc...) asparagine glycosylation sites follow: asparagine 2178 and asparagine 2199. Cystine bridges form between cysteine 2208–cysteine 2229, cysteine 2243–cysteine 2356, and cysteine 2254–cysteine 2354. N-linked (GlcNAc...) asparagine glycosylation is found at asparagine 2312 and asparagine 2351. The tract at residues 2410 to 2432 (IKQQQEEEQQEQILKDQDDRLSR) is disordered. Over residues 2422–2432 (ILKDQDDRLSR) the composition is skewed to basic and acidic residues. 9 N-linked (GlcNAc...) asparagine glycosylation sites follow: asparagine 2439, asparagine 2457, asparagine 2466, asparagine 2504, asparagine 2586, asparagine 2611, asparagine 2650, asparagine 2677, and asparagine 2688. 4 6-Cys domains span residues 2448-2663 (NEHI…ISSN), 2666-2827 (IIHG…IDEK), 2831-2979 (GKDI…INQG), and 2982-3113 (EIHG…PEPQ). Disulfide bonds link cysteine 2452/cysteine 2476 and cysteine 2490/cysteine 2638. 3 disulfide bridges follow: cysteine 2670–cysteine 2706, cysteine 2720–cysteine 2804, and cysteine 2730–cysteine 2802. A glycan (N-linked (GlcNAc...) asparagine) is linked at asparagine 2952. Cysteines 2986 and 3010 form a disulfide. 5 N-linked (GlcNAc...) asparagine glycosylation sites follow: asparagine 3011, asparagine 3016, asparagine 3066, asparagine 3093, and asparagine 3096. Disulfide bonds link cysteine 3024–cysteine 3090 and cysteine 3035–cysteine 3088.

As to quaternary structure, heterodimer; heterodimerizes with PF45/48. May be processed into a 310 kDa form as the parasite emerges from the host erythrocytes.

It is found in the cell surface. The protein localises to the cell membrane. In terms of biological role, gametocyte surface protein required for male/female gamete fusion. Also required for male gamete exflagellation and interaction with host erythrocytes. The sequence is that of Gametocyte surface protein P230 (PFS230) from Plasmodium falciparum (isolate 3D7).